The primary structure comprises 693 residues: Elongation factor G (693 aa).

In terms of domain architecture, tr-type G spans E8–L282. GTP contacts are provided by residues A17–T24, D81–H85, and N135–D138.

This sequence belongs to the TRAFAC class translation factor GTPase superfamily. Classic translation factor GTPase family. EF-G/EF-2 subfamily.

Its subcellular location is the cytoplasm. In terms of biological role, catalyzes the GTP-dependent ribosomal translocation step during translation elongation. During this step, the ribosome changes from the pre-translocational (PRE) to the post-translocational (POST) state as the newly formed A-site-bound peptidyl-tRNA and P-site-bound deacylated tRNA move to the P and E sites, respectively. Catalyzes the coordinated movement of the two tRNA molecules, the mRNA and conformational changes in the ribosome. This is Elongation factor G from Staphylococcus aureus (strain Newman).